The chain runs to 206 residues: Superoxide dismutase [Mn] (206 aa).

Residues His-27, His-82, Asp-168, and His-172 each coordinate Mn(2+).

Belongs to the iron/manganese superoxide dismutase family. In terms of assembly, homodimer. It depends on Mn(2+) as a cofactor.

The enzyme catalyses 2 superoxide + 2 H(+) = H2O2 + O2. Its function is as follows. Destroys superoxide anion radicals which are normally produced within the cells and which are toxic to biological systems. The polypeptide is Superoxide dismutase [Mn] (sodA) (Salmonella typhi).